The primary structure comprises 128 residues: Small ribosomal subunit protein eS8 (128 aa).

Belongs to the eukaryotic ribosomal protein eS8 family. As to quaternary structure, part of the 30S ribosomal subunit.

The polypeptide is Small ribosomal subunit protein eS8 (Methanococcus vannielii (strain ATCC 35089 / DSM 1224 / JCM 13029 / OCM 148 / SB)).